The primary structure comprises 293 residues: Succinate--CoA ligase [ADP-forming] subunit alpha (293 aa).

CoA-binding positions include 21–24 (TGKQ), Lys-47, and 99–101 (ITE). Residue Tyr-162 participates in substrate binding. The Tele-phosphohistidine intermediate role is filled by His-249.

The protein belongs to the succinate/malate CoA ligase alpha subunit family. Heterotetramer of two alpha and two beta subunits.

It carries out the reaction succinate + ATP + CoA = succinyl-CoA + ADP + phosphate. The catalysed reaction is GTP + succinate + CoA = succinyl-CoA + GDP + phosphate. The protein operates within carbohydrate metabolism; tricarboxylic acid cycle; succinate from succinyl-CoA (ligase route): step 1/1. In terms of biological role, succinyl-CoA synthetase functions in the citric acid cycle (TCA), coupling the hydrolysis of succinyl-CoA to the synthesis of either ATP or GTP and thus represents the only step of substrate-level phosphorylation in the TCA. The alpha subunit of the enzyme binds the substrates coenzyme A and phosphate, while succinate binding and nucleotide specificity is provided by the beta subunit. The sequence is that of Succinate--CoA ligase [ADP-forming] subunit alpha from Methanothermobacter thermautotrophicus (strain ATCC 29096 / DSM 1053 / JCM 10044 / NBRC 100330 / Delta H) (Methanobacterium thermoautotrophicum).